Reading from the N-terminus, the 300-residue chain is N-acetylmuramic acid 6-phosphate etherase (300 aa).

The 164-residue stretch at 57–220 (VAAALRAGGR…STGAMIRIGK (164 aa)) folds into the SIS domain. Glu85 (proton donor) is an active-site residue. Residue Glu116 is part of the active site.

The protein belongs to the GCKR-like family. MurNAc-6-P etherase subfamily. In terms of assembly, homodimer.

It catalyses the reaction N-acetyl-D-muramate 6-phosphate + H2O = N-acetyl-D-glucosamine 6-phosphate + (R)-lactate. It functions in the pathway amino-sugar metabolism; 1,6-anhydro-N-acetylmuramate degradation. It participates in amino-sugar metabolism; N-acetylmuramate degradation. The protein operates within cell wall biogenesis; peptidoglycan recycling. In terms of biological role, specifically catalyzes the cleavage of the D-lactyl ether substituent of MurNAc 6-phosphate, producing GlcNAc 6-phosphate and D-lactate. Together with AnmK, is also required for the utilization of anhydro-N-acetylmuramic acid (anhMurNAc) either imported from the medium or derived from its own cell wall murein, and thus plays a role in cell wall recycling. This is N-acetylmuramic acid 6-phosphate etherase from Klebsiella aerogenes (Enterobacter aerogenes).